A 355-amino-acid chain; its full sequence is MSGQPKRLMVMAGGTGGHVFPGLAVAHHLMAQGWQVRWLGTADRMEADLVPKHGIDIDFIRISGLRGKGVKALLAAPLRIFNAWRQARAIMKRFKPDVVLGMGGYVSGPGGLAAWSLGIPVVLHEQNGIAGLTNQWLAKIATTVMQAFPGAFPNAEVVGNPVRTDVLALPLPQERLAGRDGPIRVLVVGGSQGARVLNQTLPQVAARLGDTVTIWHQSGKGAQHTVEQAYAGVGQSQHKVTEFIDDMAAAYAWADVVVCRSGALTVSEIAAAGLPAIFVPFQHKDRQQYWNALPLENAGAAKIFEQPQFTVEAVADTLAGWSREALLTMAERARAVSIPDATERVASEVSRVART.

UDP-N-acetyl-alpha-D-glucosamine is bound by residues 15-17, N127, R163, S191, I244, 263-268, and Q288; these read TGG and ALTVSE.

It belongs to the glycosyltransferase 28 family. MurG subfamily.

Its subcellular location is the cell inner membrane. It catalyses the reaction di-trans,octa-cis-undecaprenyl diphospho-N-acetyl-alpha-D-muramoyl-L-alanyl-D-glutamyl-meso-2,6-diaminopimeloyl-D-alanyl-D-alanine + UDP-N-acetyl-alpha-D-glucosamine = di-trans,octa-cis-undecaprenyl diphospho-[N-acetyl-alpha-D-glucosaminyl-(1-&gt;4)]-N-acetyl-alpha-D-muramoyl-L-alanyl-D-glutamyl-meso-2,6-diaminopimeloyl-D-alanyl-D-alanine + UDP + H(+). It participates in cell wall biogenesis; peptidoglycan biosynthesis. In terms of biological role, cell wall formation. Catalyzes the transfer of a GlcNAc subunit on undecaprenyl-pyrophosphoryl-MurNAc-pentapeptide (lipid intermediate I) to form undecaprenyl-pyrophosphoryl-MurNAc-(pentapeptide)GlcNAc (lipid intermediate II). In Salmonella newport (strain SL254), this protein is UDP-N-acetylglucosamine--N-acetylmuramyl-(pentapeptide) pyrophosphoryl-undecaprenol N-acetylglucosamine transferase.